The sequence spans 233 residues: Phosphoribosylaminoimidazole-succinocarboxamide synthase (233 aa).

The protein belongs to the SAICAR synthetase family.

The catalysed reaction is 5-amino-1-(5-phospho-D-ribosyl)imidazole-4-carboxylate + L-aspartate + ATP = (2S)-2-[5-amino-1-(5-phospho-beta-D-ribosyl)imidazole-4-carboxamido]succinate + ADP + phosphate + 2 H(+). It participates in purine metabolism; IMP biosynthesis via de novo pathway; 5-amino-1-(5-phospho-D-ribosyl)imidazole-4-carboxamide from 5-amino-1-(5-phospho-D-ribosyl)imidazole-4-carboxylate: step 1/2. This Thermococcus sibiricus (strain DSM 12597 / MM 739) protein is Phosphoribosylaminoimidazole-succinocarboxamide synthase.